Consider the following 53-residue polypeptide: Large ribosomal subunit protein eL40 (53 aa).

The protein belongs to the eukaryotic ribosomal protein eL40 family.

In Pyrobaculum islandicum (strain DSM 4184 / JCM 9189 / GEO3), this protein is Large ribosomal subunit protein eL40.